The sequence spans 153 residues: Ribonuclease H (153 aa).

The 142-residue stretch at 4-145 (SVDSVELFTD…ADQLANRGVD (142 aa)) folds into the RNase H type-1 domain. Residues Asp-13, Glu-51, Asp-73, and Asp-137 each coordinate Mg(2+).

This sequence belongs to the RNase H family. Monomer. Requires Mg(2+) as cofactor.

It is found in the cytoplasm. The enzyme catalyses Endonucleolytic cleavage to 5'-phosphomonoester.. Endonuclease that specifically degrades the RNA of RNA-DNA hybrids. The protein is Ribonuclease H of Pseudomonas fluorescens (strain Pf0-1).